The sequence spans 201 residues: Oligoribonuclease (201 aa).

One can recognise an Exonuclease domain in the interval 20–183 (LVWLDMEMTG…ADIHESIDEL (164 aa)). Tyr141 is an active-site residue.

It belongs to the oligoribonuclease family.

The protein localises to the cytoplasm. In terms of biological role, 3'-to-5' exoribonuclease specific for small oligoribonucleotides. This Burkholderia mallei (strain NCTC 10229) protein is Oligoribonuclease.